Consider the following 863-residue polypeptide: Leucine--tRNA ligase (863 aa).

The short motif at 42–52 is the 'HIGH' region element; sequence PYPSGRLHMGH. A 'KMSKS' region motif is present at residues 622–626; it reads KMSKS. Lysine 625 contacts ATP.

It belongs to the class-I aminoacyl-tRNA synthetase family.

It localises to the cytoplasm. The enzyme catalyses tRNA(Leu) + L-leucine + ATP = L-leucyl-tRNA(Leu) + AMP + diphosphate. The sequence is that of Leucine--tRNA ligase from Shewanella denitrificans (strain OS217 / ATCC BAA-1090 / DSM 15013).